A 308-amino-acid chain; its full sequence is MSEQHSLNPFESGSVTASDVAAAKSGAEDLVNTLTAHTVHPSTELPSATSFPSALPNSENPVIQNISSSSSEPHHTSQSTPGETSSPVCPVSGAHGGADKKCPALEAGCPFTNTTKQNVDPEISNALWSVLTWKNTSCSFSTLMSILALVYVPSWINLPRLFFRTFRYVFLITSIIEFGGLFASNGKRGVLSHFRSSYITCDSKALDRIVNSIVDIFNVMLIQFQRILFAESPILTFTASVAAFIEFFLSGFLSYKSLFVWNVLFAFILPRLYVCNERSIKHLVASLERSGDKLKKQATETINTTVNK.

Polar residues-rich tracts occupy residues 1–17 and 41–66; these read MSEQ…SVTA and PSTE…IQNI. Disordered regions lie at residues 1 to 22 and 41 to 92; these read MSEQ…DVAA and PSTE…CPVS. A glycan (N-linked (GlcNAc...) asparagine) is linked at Asn65. Residues 67–81 are compositionally biased toward low complexity; that stretch reads SSSSSEPHHTSQSTP. N-linked (GlcNAc...) asparagine glycans are attached at residues Asn113 and Asn135. Positions 127–308 constitute a Reticulon domain; it reads LWSVLTWKNT…TETINTTVNK (182 aa). The next 4 helical transmembrane spans lie at 138 to 158, 166 to 186, 233 to 253, and 255 to 275; these read CSFS…WINL, FRYV…ASNG, PILT…SGFL, and YKSL…LYVC. The N-linked (GlcNAc...) asparagine glycan is linked to Asn303.

In terms of assembly, interacts with TTS1 and YOP1.

The protein localises to the endoplasmic reticulum membrane. It is found in the nucleus membrane. In terms of biological role, required for the correct positioning of the cellular division plane by delimiting the actomyosin ring assembly at the cell equator. Overexpression causes cell lysis. The polypeptide is Reticulon-like protein 1 (rtn1) (Schizosaccharomyces pombe (strain 972 / ATCC 24843) (Fission yeast)).